Reading from the N-terminus, the 81-residue chain is Large ribosomal subunit protein bL31B (81 aa).

This sequence belongs to the bacterial ribosomal protein bL31 family. Type B subfamily. As to quaternary structure, part of the 50S ribosomal subunit.

The polypeptide is Large ribosomal subunit protein bL31B (Borreliella afzelii (strain PKo) (Borrelia afzelii)).